A 105-amino-acid chain; its full sequence is Nucleoid-associated protein MXAN_1931 (105 aa).

It belongs to the YbaB/EbfC family. As to quaternary structure, homodimer.

The protein localises to the cytoplasm. It localises to the nucleoid. In terms of biological role, binds to DNA and alters its conformation. May be involved in regulation of gene expression, nucleoid organization and DNA protection. The protein is Nucleoid-associated protein MXAN_1931 of Myxococcus xanthus (strain DK1622).